Here is a 256-residue protein sequence, read N- to C-terminus: Uridylate kinase (256 aa).

10-13 (KLSG) contacts ATP. Residue Gly-52 coordinates UMP. Residues Gly-53 and Arg-57 each coordinate ATP. Residues Asp-72 and 134–141 (NGQPFLTT) contribute to the UMP site. The ATP site is built by Tyr-168 and Asp-171.

The protein belongs to the UMP kinase family. As to quaternary structure, homohexamer.

It is found in the cytoplasm. It catalyses the reaction UMP + ATP = UDP + ADP. The protein operates within pyrimidine metabolism; CTP biosynthesis via de novo pathway; UDP from UMP (UMPK route): step 1/1. Inhibited by UTP. Functionally, catalyzes the reversible phosphorylation of UMP to UDP. This chain is Uridylate kinase, found in Frankia alni (strain DSM 45986 / CECT 9034 / ACN14a).